The primary structure comprises 247 residues: MyoD family inhibitor domain-containing protein (247 aa).

Disordered regions lie at residues 1-67 and 80-110; these read MSCA…NPSA and QLQTSAQEPGKEETGKIKNGGHTRMSNGNGI. In terms of domain architecture, MDFI spans 74–247; the sequence is QPERLPQLQT…MECCGICFPS (174 aa). Phosphoserine is present on residues S129 and S141.

Belongs to the MDFI family. As to quaternary structure, interacts with HAND1; the interaction sequesters Hand1 into the nucleolus and inhibits its activity. Interacts (via C-terminus) with ZIC2. Interacts (via C-terminus) with AXIN1, the histidine-rich region of CCNT1/cyclin-T and weakly with LEF1. Interacts with CCNT2. Interacts with GATA2. Interacts (via C-terminus) with Piezo channel composed of PIEZO1 or PIEZO2; the interaction prolongs Piezo channel inactivation. Post-translationally, palmitoylated. In terms of tissue distribution, in the embryo, robust expression is detected between 16.5 and 18.5 dpc in lung, kidney, and salivary glands. In the developing cardiovascular system, it is detected in lymphatic and cardiac valves (at protein level).

It localises to the cytoplasm. Its subcellular location is the secreted. Required to control the activity of various transcription factors through their sequestration in the cytoplasm. Retains nuclear Zic proteins ZIC1, ZIC2 and ZIC3 in the cytoplasm and inhibits their transcriptional activation. Modulates the expression from cellular promoters. Binds to the axin complex, resulting in an increase in the level of free beta-catenin. Affects axin-regulation of the WNT and JNK signaling pathways. Involved in the development of lymphatic vessel valves. Required to promote lymphatic endothelial cell migration, in a process that involves down-regulation of integrin beta 1 activation and control of cell adhesion to the extracellular matrix. Regulates the activity of mechanosensitive Piezo channel. The protein is MyoD family inhibitor domain-containing protein of Mus musculus (Mouse).